The primary structure comprises 86 residues: CLAVATA3/ESR (CLE)-related protein 8 (86 aa).

Positions 1 to 24 (MKVLKRDSMLLLITLYFLLTTSMA) are cleaved as a signal peptide. Residues 43 to 86 (DLKQNKAKPHLPNLFRTMRRVPTGPNPLHHISPPQPGSLNYARN) are disordered. Hydroxyproline is present on residues proline 64 and proline 67. Proline 67 carries O-linked (Ara...) hydroxyproline glycosylation.

This sequence belongs to the CLV3/ESR signal peptide family. Post-translationally, the O-glycosylation (arabinosylation) of the hydroxyproline Pro-67 enhances binding affinity of the CLE8p peptide for its receptor. In terms of tissue distribution, mostly expressed in siliques, and, to a lower extent, in flowers. Expressed in young embryos and endosperm.

The protein localises to the secreted. Its subcellular location is the extracellular space. In terms of biological role, extracellular signal peptide that regulates cell fate. Represses root apical meristem maintenance. Positively regulates the expression of the transcription factor WOX8 and thus, regulates early embryo development. Regulates the transition of protophloem cells from proliferation to differentiation, thus impinging on postembryonic growth capacity of the root meristem; this signaling pathway requires CRN and CLV2. This Arabidopsis thaliana (Mouse-ear cress) protein is CLAVATA3/ESR (CLE)-related protein 8.